A 314-amino-acid polypeptide reads, in one-letter code: Glycerol-3-phosphate dehydrogenase [NAD(P)+] (314 aa).

Positions 14, 15, 35, and 108 each coordinate NADPH. Positions 108 and 136 each coordinate sn-glycerol 3-phosphate. A140 provides a ligand contact to NADPH. Positions 191, 247, 257, 258, and 259 each coordinate sn-glycerol 3-phosphate. The active-site Proton acceptor is the K191. R258 is a binding site for NADPH. Residues L282 and E284 each coordinate NADPH.

Belongs to the NAD-dependent glycerol-3-phosphate dehydrogenase family.

It localises to the cytoplasm. It catalyses the reaction sn-glycerol 3-phosphate + NAD(+) = dihydroxyacetone phosphate + NADH + H(+). The catalysed reaction is sn-glycerol 3-phosphate + NADP(+) = dihydroxyacetone phosphate + NADPH + H(+). It functions in the pathway membrane lipid metabolism; glycerophospholipid metabolism. Functionally, catalyzes the reduction of the glycolytic intermediate dihydroxyacetone phosphate (DHAP) to sn-glycerol 3-phosphate (G3P), the key precursor for phospholipid synthesis. This is Glycerol-3-phosphate dehydrogenase [NAD(P)+] from Rickettsia bellii (strain OSU 85-389).